A 503-amino-acid chain; its full sequence is Probable cytosol aminopeptidase (503 aa).

Mn(2+) contacts are provided by lysine 270 and aspartate 275. Lysine 282 is a catalytic residue. Residues aspartate 293, aspartate 352, and glutamate 354 each coordinate Mn(2+). The active site involves arginine 356.

Belongs to the peptidase M17 family. Requires Mn(2+) as cofactor.

Its subcellular location is the cytoplasm. It carries out the reaction Release of an N-terminal amino acid, Xaa-|-Yaa-, in which Xaa is preferably Leu, but may be other amino acids including Pro although not Arg or Lys, and Yaa may be Pro. Amino acid amides and methyl esters are also readily hydrolyzed, but rates on arylamides are exceedingly low.. The catalysed reaction is Release of an N-terminal amino acid, preferentially leucine, but not glutamic or aspartic acids.. In terms of biological role, presumably involved in the processing and regular turnover of intracellular proteins. Catalyzes the removal of unsubstituted N-terminal amino acids from various peptides. This Shigella dysenteriae serotype 1 (strain Sd197) protein is Probable cytosol aminopeptidase.